A 311-amino-acid chain; its full sequence is 4-hydroxyproline 2-epimerase (311 aa).

Residue Cys88 is the Proton acceptor of the active site. Substrate-binding positions include 89–90, His208, and Asp232; that span reads GH. Cys236 functions as the Proton donor in the catalytic mechanism. 237-238 is a binding site for substrate; it reads GT.

Belongs to the proline racemase family.

The enzyme catalyses trans-4-hydroxy-L-proline = cis-4-hydroxy-D-proline. Functionally, catalyzes the epimerization of trans-4-hydroxy-L-proline (t4LHyp) to cis-4-hydroxy-D-proline (c4DHyp). Is likely involved in a degradation pathway that converts t4LHyp to alpha-ketoglutarate. Displays no proline racemase activity. The protein is 4-hydroxyproline 2-epimerase of Chromohalobacter salexigens (strain ATCC BAA-138 / DSM 3043 / CIP 106854 / NCIMB 13768 / 1H11).